Reading from the N-terminus, the 58-residue chain is Large ribosomal subunit protein uL30 (58 aa).

Belongs to the universal ribosomal protein uL30 family. In terms of assembly, part of the 50S ribosomal subunit.

This is Large ribosomal subunit protein uL30 from Pseudomonas putida (strain ATCC 700007 / DSM 6899 / JCM 31910 / BCRC 17059 / LMG 24140 / F1).